Here is a 154-residue protein sequence, read N- to C-terminus: Ribonuclease H (154 aa).

An RNase H type-1 domain is found at 1 to 142 (MKQVDIFTDG…CDTIARGHAS (142 aa)). Positions 9, 47, 69, and 134 each coordinate Mg(2+).

The protein belongs to the RNase H family. In terms of assembly, monomer. The cofactor is Mg(2+).

It localises to the cytoplasm. The enzyme catalyses Endonucleolytic cleavage to 5'-phosphomonoester.. Endonuclease that specifically degrades the RNA of RNA-DNA hybrids. This chain is Ribonuclease H, found in Oleidesulfovibrio alaskensis (strain ATCC BAA-1058 / DSM 17464 / G20) (Desulfovibrio alaskensis).